We begin with the raw amino-acid sequence, 109 residues long: Ferredoxin (109 aa).

2 4Fe-4S ferredoxin-type domains span residues 2-30 (TYVV…YEGE) and 31-60 (FMLV…PESP). [3Fe-4S] cluster contacts are provided by cysteine 9 and cysteine 17. The [4Fe-4S] cluster site is built by cysteine 21, cysteine 40, cysteine 43, and cysteine 46. Cysteine 50 contributes to the [3Fe-4S] cluster binding site.

It depends on [4Fe-4S] cluster as a cofactor. [3Fe-4S] cluster is required as a cofactor.

Its function is as follows. Ferredoxins are iron-sulfur proteins that transfer electrons in a wide variety of metabolic reactions. This chain is Ferredoxin (fdxA), found in Rickettsia felis (strain ATCC VR-1525 / URRWXCal2) (Rickettsia azadi).